The primary structure comprises 239 residues: Ribosomal RNA small subunit methyltransferase G (239 aa).

S-adenosyl-L-methionine-binding positions include Gly75, Leu80, 126-127 (AE), and Arg142.

The protein belongs to the methyltransferase superfamily. RNA methyltransferase RsmG family.

It is found in the cytoplasm. Functionally, specifically methylates the N7 position of guanine in position 518 of 16S rRNA. The sequence is that of Ribosomal RNA small subunit methyltransferase G from Streptomyces coelicolor (strain ATCC BAA-471 / A3(2) / M145).